The following is a 273-amino-acid chain: Urease accessory protein UreD (273 aa).

The protein belongs to the UreD family. As to quaternary structure, ureD, UreF and UreG form a complex that acts as a GTP-hydrolysis-dependent molecular chaperone, activating the urease apoprotein by helping to assemble the nickel containing metallocenter of UreC. The UreE protein probably delivers the nickel.

The protein resides in the cytoplasm. Its function is as follows. Required for maturation of urease via the functional incorporation of the urease nickel metallocenter. This is Urease accessory protein UreD from Rhizobium rhizogenes (strain K84 / ATCC BAA-868) (Agrobacterium radiobacter).